We begin with the raw amino-acid sequence, 274 residues long: Glutamate racemase (274 aa).

Substrate-binding positions include 9 to 10 (DS) and 41 to 42 (YG). Cys-73 (proton donor/acceptor) is an active-site residue. Position 74 to 75 (74 to 75 (NT)) interacts with substrate. Cys-183 acts as the Proton donor/acceptor in catalysis. A substrate-binding site is contributed by 184–185 (TH).

This sequence belongs to the aspartate/glutamate racemases family.

It carries out the reaction L-glutamate = D-glutamate. It participates in cell wall biogenesis; peptidoglycan biosynthesis. Provides the (R)-glutamate required for cell wall biosynthesis. In Shewanella baltica (strain OS185), this protein is Glutamate racemase.